The chain runs to 134 residues: Small ribosomal subunit protein uS11 (134 aa).

Residues 114 to 134 (TPVPHNGTRPPRKWFKRQEKR) are disordered. Over residues 123 to 134 (PPRKWFKRQEKR) the composition is skewed to basic residues.

The protein belongs to the universal ribosomal protein uS11 family. In terms of assembly, part of the 30S ribosomal subunit. Interacts with proteins S7 and S18. Binds to IF-3.

Located on the platform of the 30S subunit, it bridges several disparate RNA helices of the 16S rRNA. Forms part of the Shine-Dalgarno cleft in the 70S ribosome. The polypeptide is Small ribosomal subunit protein uS11 (Mesomycoplasma hyopneumoniae (strain J / ATCC 25934 / NCTC 10110) (Mycoplasma hyopneumoniae)).